A 507-amino-acid polypeptide reads, in one-letter code: Natural resistance-associated macrophage protein 1 (507 aa).

The interval 1–36 (MIRDKNPQRVNRPSYGSISSLPSPAPQPEPSRNTYL) is disordered. Over 1 to 39 (MIRDKNPQRVNRPSYGSISSLPSPAPQPEPSRNTYLSEK) the chain is Cytoplasmic. Residues 8–22 (QRVNRPSYGSISSLP) are compositionally biased toward polar residues. Residues 40-60 (IPIPSTEQLLWVLLWATVLGL) traverse the membrane as a helical segment. Residues 61–123 (LCQRLAARLG…ISFNLLSAGR (63 aa)) are Extracellular-facing. A helical transmembrane segment spans residues 124–144 (IPLWGGVLITIVDTFFFLFLD). At 145 to 152 (NYGLRKLE) the chain is on the cytoplasmic side. Residues 153 to 173 (AFFGFLVTIMALTFGYEYVVA) traverse the membrane as a helical segment. Topologically, residues 174–199 (RPSQGALLKGLFLPSCPGCGQPELLQ) are extracellular. A helical membrane pass occupies residues 200 to 220 (AVGIVGAIIMPHNIYLHSALV). The Cytoplasmic portion of the chain corresponds to 221 to 245 (KSREVDRTRRGDVREANMYFLTEAT). Residues 246-266 (IALFVSFIINLFVMAVFGQAF) traverse the membrane as a helical segment. The Extracellular segment spans residues 267–305 (YQQTNEEAFNICANSSLHNYAKIFPRDNNTVSVDIYQGG). 2 N-linked (GlcNAc...) asparagine glycosylation sites follow: Asn-280 and Asn-294. A helical membrane pass occupies residues 306 to 326 (VILGCLFGPAALYIWAVGLLA). Topologically, residues 327–353 (AGQSSTMTGTYAGQFVMEGFLKLRWSR) are cytoplasmic. Residues 354 to 374 (FARVLLTRSCAILPTVLVAVF) form a helical membrane-spanning segment. The Extracellular portion of the chain corresponds to 375–391 (RDLRDLSGLNDLLNVLQ). A helical membrane pass occupies residues 392-412 (SLLLPFAVLPILTFTSMPAVM). Residues 413–422 (QEFANGWLSK) lie on the Cytoplasmic side of the membrane. The helical transmembrane segment at 423–443 (VITSCIMALVCAINLYFVISY) threads the bilayer. Residues 444-451 (LPSLPHPA) lie on the Extracellular side of the membrane. The chain crosses the membrane as a helical span at residues 452–472 (YFGLVALLAIGYLGLTAYLAW). Residues 473–507 (TCCIAHGAKFLTHSSHQRFLYGLPIEEQEGREGSG) are Cytoplasmic-facing.

This sequence belongs to the NRAMP family.

The protein localises to the late endosome membrane. The protein resides in the lysosome membrane. The enzyme catalyses Zn(2+)(in) + H(+)(out) = Zn(2+)(out) + H(+)(in). The catalysed reaction is Fe(2+)(in) + H(+)(out) = Fe(2+)(out) + H(+)(in). It carries out the reaction Mn(2+)(in) + H(+)(out) = Mn(2+)(out) + H(+)(in). Functionally, macrophage-specific antiporter that fluxes metal ions in either direction against a proton gradient. Localized to late endosomal lysosomal membranes, delivers bivalent cations from the cytosol into these acidic compartments where they may directly affect antimicrobial activity. Involved in iron metabolism and host natural resistance to infection with intracellular parasites. Pathogen resistance involves sequestration of Fe(2+) and Mn(2+), cofactors of both prokaryotic and eukaryotic catalases and superoxide dismutases, not only to protect the macrophage against its own generation of reactive oxygen species, but to deny the cations to the pathogen for synthesis of its protective enzymes. The protein is Natural resistance-associated macrophage protein 1 (Slc11a1) of Rattus norvegicus (Rat).